A 321-amino-acid chain; its full sequence is Holliday junction branch migration complex subunit RuvB (321 aa).

A large ATPase domain (RuvB-L) region spans residues 1–173 (MMMEQECVDD…FGIISRLEFY (173 aa)). ATP contacts are provided by residues isoleucine 12, arginine 13, glycine 54, lysine 57, threonine 58, threonine 59, 120 to 122 (EDF), arginine 163, tyrosine 173, and arginine 210. Threonine 58 is a Mg(2+) binding site. The interval 174–244 (TPAELACIVK…LASDALARMD (71 aa)) is small ATPAse domain (RuvB-S). Positions 247-321 (ELGLDQMDRK…KAYRHMNLLA (75 aa)) are head domain (RuvB-H). DNA is bound by residues arginine 302 and arginine 307.

It belongs to the RuvB family. Homohexamer. Forms an RuvA(8)-RuvB(12)-Holliday junction (HJ) complex. HJ DNA is sandwiched between 2 RuvA tetramers; dsDNA enters through RuvA and exits via RuvB. An RuvB hexamer assembles on each DNA strand where it exits the tetramer. Each RuvB hexamer is contacted by two RuvA subunits (via domain III) on 2 adjacent RuvB subunits; this complex drives branch migration. In the full resolvosome a probable DNA-RuvA(4)-RuvB(12)-RuvC(2) complex forms which resolves the HJ.

It is found in the cytoplasm. It catalyses the reaction ATP + H2O = ADP + phosphate + H(+). In terms of biological role, the RuvA-RuvB-RuvC complex processes Holliday junction (HJ) DNA during genetic recombination and DNA repair, while the RuvA-RuvB complex plays an important role in the rescue of blocked DNA replication forks via replication fork reversal (RFR). RuvA specifically binds to HJ cruciform DNA, conferring on it an open structure. The RuvB hexamer acts as an ATP-dependent pump, pulling dsDNA into and through the RuvAB complex. RuvB forms 2 homohexamers on either side of HJ DNA bound by 1 or 2 RuvA tetramers; 4 subunits per hexamer contact DNA at a time. Coordinated motions by a converter formed by DNA-disengaged RuvB subunits stimulates ATP hydrolysis and nucleotide exchange. Immobilization of the converter enables RuvB to convert the ATP-contained energy into a lever motion, pulling 2 nucleotides of DNA out of the RuvA tetramer per ATP hydrolyzed, thus driving DNA branch migration. The RuvB motors rotate together with the DNA substrate, which together with the progressing nucleotide cycle form the mechanistic basis for DNA recombination by continuous HJ branch migration. Branch migration allows RuvC to scan DNA until it finds its consensus sequence, where it cleaves and resolves cruciform DNA. The protein is Holliday junction branch migration complex subunit RuvB of Oleidesulfovibrio alaskensis (strain ATCC BAA-1058 / DSM 17464 / G20) (Desulfovibrio alaskensis).